A 331-amino-acid chain; its full sequence is Pantothenate kinase (331 aa).

109–116 (GSVAVGKS) serves as a coordination point for ATP.

Belongs to the prokaryotic pantothenate kinase family.

It localises to the cytoplasm. The catalysed reaction is (R)-pantothenate + ATP = (R)-4'-phosphopantothenate + ADP + H(+). It participates in cofactor biosynthesis; coenzyme A biosynthesis; CoA from (R)-pantothenate: step 1/5. The protein is Pantothenate kinase of Rhizobium rhizogenes (strain K84 / ATCC BAA-868) (Agrobacterium radiobacter).